Here is a 703-residue protein sequence, read N- to C-terminus: Arf-GAP with GTPase, ANK repeat and PH domain-containing protein 9 (703 aa).

Disordered regions lie at residues 249–287 (KRNGGGSLNNYSSSIPPTPSTSQEDPQFSVPPTANTPTP), 299–323 (FTSEKGSDPDKERKAPENHADTIGS), and 427–449 (SSTTSPKLNPPPSPHANKKKHLK). The span at 271 to 286 (QEDPQFSVPPTANTPT) shows a compositional bias: polar residues. The span at 303-318 (KGSDPDKERKAPENHA) shows a compositional bias: basic and acidic residues. In terms of domain architecture, PH spans 327 to 488 (IPIKQGMLLK…WVQAIQSQIL (162 aa)). Residues 509 to 629 (AMALQSIQNM…LFLAPLPCTE (121 aa)) form the Arf-GAP domain. The C4-type zinc finger occupies 524–547 (CVDCETQNPKWASLNLGVLMCIEC). The stretch at 631–700 (SLGQQLLRAT…WTSWPEMPTG (70 aa)) is one ANK repeat.

Belongs to the centaurin gamma-like family.

Functionally, putative GTPase-activating protein. This is Arf-GAP with GTPase, ANK repeat and PH domain-containing protein 9 (AGAP9) from Homo sapiens (Human).